The chain runs to 285 residues: HTH-type transcriptional regulator MurR (285 aa).

Positions methionine 1–serine 77 constitute an HTH rpiR-type domain. Positions serine 37–glutamine 56 form a DNA-binding region, H-T-H motif. The 141-residue stretch at isoleucine 128–valine 268 folds into the SIS domain.

In terms of assembly, homotetramer.

Its pathway is amino-sugar metabolism; N-acetylmuramate degradation [regulation]. Functionally, represses the expression of the murPQ operon involved in the uptake and degradation of N-acetylmuramic acid (MurNAc). Binds to two adjacent inverted repeats within the operator region. MurNAc 6-phosphate, the substrate of MurQ, is the specific inducer that weakens binding of MurR to the operator. This chain is HTH-type transcriptional regulator MurR, found in Escherichia coli O157:H7.